The primary structure comprises 206 residues: A-type ATP synthase subunit E (206 aa).

It belongs to the V-ATPase E subunit family. Has multiple subunits with at least A(3), B(3), C, D, E, F, H, I and proteolipid K(x).

It is found in the cell membrane. Its function is as follows. Component of the A-type ATP synthase that produces ATP from ADP in the presence of a proton gradient across the membrane. The polypeptide is A-type ATP synthase subunit E (Methanothermobacter thermautotrophicus (strain ATCC 29096 / DSM 1053 / JCM 10044 / NBRC 100330 / Delta H) (Methanobacterium thermoautotrophicum)).